The sequence spans 544 residues: uncharacterized protein (544 aa).

Positions 1–34 (MIARRMLCARPWGPSCVVCALCGALAALVPAVGA) are cleaved as a signal peptide. The interval 38-69 (AVPAPGTPAPPAHTASEAVPPAPEPRAEGEQP) is disordered.

Belongs to the TP096X family.

This is an uncharacterized protein from Treponema pallidum (strain Nichols).